A 185-amino-acid polypeptide reads, in one-letter code: uncharacterized protein (185 aa).

This is an uncharacterized protein from Archaeoglobus fulgidus (strain ATCC 49558 / DSM 4304 / JCM 9628 / NBRC 100126 / VC-16).